Reading from the N-terminus, the 548-residue chain is Probable sucrose-6-phosphate hydrolase (548 aa).

Residues 105 to 108, Gln124, 167 to 168, 228 to 229, and Glu283 contribute to the substrate site; these read LLND, FS, and RD. Asp108 is a catalytic residue.

This sequence belongs to the glycosyl hydrolase 32 family.

It localises to the cytoplasm. It carries out the reaction Hydrolysis of terminal non-reducing beta-D-fructofuranoside residues in beta-D-fructofuranosides.. It functions in the pathway glycan biosynthesis; sucrose metabolism. Functionally, enables the bacterium to metabolize sucrose as a sole carbon source. The chain is Probable sucrose-6-phosphate hydrolase from Vibrio cholerae serotype O1 (strain ATCC 39315 / El Tor Inaba N16961).